Consider the following 674-residue polypeptide: Glutaminase kidney isoform, mitochondrial (674 aa).

Residues 1-54 (MMRLRGSAMLRELLLRPPAAVGGVLRRTQPLGTLCRRPRGGSRPAAGLVAAARL) constitute a mitochondrion transit peptide. Positions 56 to 123 (PWWGGGGRAK…PGETDAFGNS (68 aa)) are disordered. Residues 58-71 (WGGGGRAKGPGSGG) show a composition bias toward gly residues. A compositionally biased stretch (low complexity) spans 89-101 (PPQQQQQQQQQPG). N6-succinyllysine occurs at positions 135 and 169. Position 291 (Ser291) interacts with substrate. An N6-acetyllysine modification is found at Lys316. The highly mobile activation loop stretch occupies residues 320 to 327 (GLRFNKLF). Asn340, Glu386, Asn393, Tyr419, Tyr471, and Val489 together coordinate substrate. 2 ANK repeats span residues 590-619 (DSRT…VNPF) and 624-653 (WNNT…QYTP). Positions 652 to 674 (TPQGDSDDGKENQTVHKNLDGLL) are disordered. Position 657 is a phosphoserine (Ser657). Residues 658-674 (DDGKENQTVHKNLDGLL) are compositionally biased toward basic and acidic residues.

Belongs to the glutaminase family. In terms of assembly, homotetramer, dimer of dimers. Tetramer composed of 68 and 65 kDa peptides in a 1:3 ratio. Can assemble into higher oligomers (in vitro), but the physiological significance of this is not clear. Interacts with RAF1 and MAP2K2. Interacts with ATCAY; the interaction is direct and may control GLS localization, negatively regulating its activity. Post-translationally, synthesized as a 74-kDa cytosolic precursor which is proteolytically processed by the mitochondrial-processing peptidase (MPP) via a 72-kDa intermediate to yield the mature mitochondrial 68- and 65-kDa subunits. In terms of tissue distribution, kidney, brain, and intestine.

It localises to the mitochondrion. It is found in the cytoplasm. Its subcellular location is the cytosol. The protein localises to the mitochondrion matrix. It catalyses the reaction L-glutamine + H2O = L-glutamate + NH4(+). Its activity is regulated as follows. Enzyme activity is increased by phosphate, due to increased kcat and increased substrate affinity. In terms of biological role, catalyzes the first reaction in the primary pathway for the renal catabolism of glutamine. Plays a role in maintaining acid-base homeostasis. Regulates the levels of the neurotransmitter glutamate, the main excitatory neurotransmitter in the brain. The polypeptide is Glutaminase kidney isoform, mitochondrial (Gls) (Rattus norvegicus (Rat)).